Consider the following 341-residue polypeptide: Cytochrome c biogenesis protein CcsA (341 aa).

8 helical membrane passes run leucine 16–isoleucine 36, leucine 37–glycine 57, leucine 68–isoleucine 88, leucine 97–leucine 117, valine 142–isoleucine 162, isoleucine 249–asparagine 269, tryptophan 276–leucine 296, and alanine 310–leucine 330.

This sequence belongs to the CcmF/CycK/Ccl1/NrfE/CcsA family. As to quaternary structure, may interact with ccs1.

It localises to the cellular thylakoid membrane. Functionally, required during biogenesis of c-type cytochromes (cytochrome c6 and cytochrome f) at the step of heme attachment. This chain is Cytochrome c biogenesis protein CcsA, found in Rippkaea orientalis (strain PCC 8801 / RF-1) (Cyanothece sp. (strain PCC 8801)).